A 469-amino-acid chain; its full sequence is Glutamate--tRNA ligase (469 aa).

A 'HIGH' region motif is present at residues 9–19 (PSPTGMFHVGG). Cysteine 100, cysteine 102, cysteine 122, and aspartate 124 together coordinate Zn(2+). Residues 232-236 (KLSKR) carry the 'KMSKS' region motif. Residue lysine 235 participates in ATP binding.

Belongs to the class-I aminoacyl-tRNA synthetase family. Glutamate--tRNA ligase type 1 subfamily. In terms of assembly, monomer. Zn(2+) is required as a cofactor.

It is found in the cytoplasm. The catalysed reaction is tRNA(Glu) + L-glutamate + ATP = L-glutamyl-tRNA(Glu) + AMP + diphosphate. Catalyzes the attachment of glutamate to tRNA(Glu) in a two-step reaction: glutamate is first activated by ATP to form Glu-AMP and then transferred to the acceptor end of tRNA(Glu). The chain is Glutamate--tRNA ligase from Salinispora arenicola (strain CNS-205).